Consider the following 359-residue polypeptide: Fc receptor-like A (359 aa).

The first 27 residues, Met1 to Ala27, serve as a signal peptide directing secretion. 2 Ig-like C2-type domains span residues Pro70 to Ser159 and Pro170 to Glu257. 2 disulfides stabilise this stretch: Cys99–Cys143 and Cys192–Cys240. Residues Arg259–Pro313 are disordered. A compositionally biased stretch (low complexity) spans Ser279–Glu288. The segment covering Ala289–Pro299 has biased composition (pro residues).

Monomer or homodimer; disulfide-linked. In terms of tissue distribution, expressed specifically in primary and secondary lymphoid tissues like lymph node, spleen and tonsil. Specifically expressed in B-cells with a high level in normal germinal center B-cells, centroblasts and in a subset of diffuse large B-cell lymphomas. Highly expressed in bone marrow B-cells and weakly in earlier B lineage cells. Expressed in pre-germinal and germinal center B-cells in secondary lymphoid tissues. Also expressed in melanoma and melanocytes.

It is found in the cytoplasm. May be implicated in B-cell differentiation and lymphomagenesis. This is Fc receptor-like A (FCRLA) from Homo sapiens (Human).